The primary structure comprises 77 residues: Large ribosomal subunit protein bL28 (77 aa).

The protein belongs to the bacterial ribosomal protein bL28 family.

The protein is Large ribosomal subunit protein bL28 of Polynucleobacter necessarius subsp. necessarius (strain STIR1).